A 281-amino-acid polypeptide reads, in one-letter code: Bidirectional sugar transporter SWEET14 (281 aa).

The Extracellular portion of the chain corresponds to 1–6 (MVLTHN). A helical transmembrane segment spans residues 7 to 27 (VLAVTFGVLGNIISFIVFLAP). Positions 11–97 (TFGVLGNIIS…ILFITYANKK (87 aa)) constitute a MtN3/slv 1 domain. The Cytoplasmic portion of the chain corresponds to 28-42 (VPTFVRICKKKSIEG). A helical transmembrane segment spans residues 43-63 (FESLPYVSALFSAMLWIYYAL). At 64-70 (QKDGAGF) the chain is on the extracellular side. Residues 71-91 (LLITINAVGCFIETIYIILFI) traverse the membrane as a helical segment. Residues 92–104 (TYANKKARISTLK) are Cytoplasmic-facing. The helical transmembrane segment at 105–125 (VLGLLNFLGFAAIILVCELLT) threads the bilayer. Residues 126-132 (KGSNREK) lie on the Extracellular side of the membrane. The helical transmembrane segment at 133 to 153 (VLGGICVGFSVCVFAAPLSIM) threads the bilayer. Positions 133 to 216 (VLGGICVGFS…MILYVIFKYY (84 aa)) constitute a MtN3/slv 2 domain. Over 154–166 (RVVIRTKSVEFMP) the chain is Cytoplasmic. Residues 167-187 (FSLSLFLTISAITWLFYGLAI) form a helical membrane-spanning segment. At 188–192 (KDFYV) the chain is on the extracellular side. Residues 193-213 (ALPNILGAFLGAVQMILYVIF) traverse the membrane as a helical segment. The Cytoplasmic segment spans residues 214–281 (KYYKTPLVVD…EDQMDKKMPN (68 aa)). Residues 244–259 (TPASGDLTVQPQTNPD) show a composition bias toward polar residues. The interval 244–281 (TPASGDLTVQPQTNPDVSHPIKTHGGDLEDQMDKKMPN) is disordered. Residues 267-281 (HGGDLEDQMDKKMPN) show a composition bias toward basic and acidic residues.

Belongs to the SWEET sugar transporter family. As to quaternary structure, forms homooligomers and/or heterooligomers.

It localises to the cell membrane. In terms of biological role, mediates both low-affinity uptake and efflux of sugar across the plasma membrane. In Arabidopsis thaliana (Mouse-ear cress), this protein is Bidirectional sugar transporter SWEET14.